The primary structure comprises 406 residues: Tryptophan synthase beta chain (406 aa).

Position 99 is an N6-(pyridoxal phosphate)lysine (K99).

The protein belongs to the TrpB family. As to quaternary structure, tetramer of two alpha and two beta chains. Pyridoxal 5'-phosphate is required as a cofactor.

The enzyme catalyses (1S,2R)-1-C-(indol-3-yl)glycerol 3-phosphate + L-serine = D-glyceraldehyde 3-phosphate + L-tryptophan + H2O. It participates in amino-acid biosynthesis; L-tryptophan biosynthesis; L-tryptophan from chorismate: step 5/5. Functionally, the beta subunit is responsible for the synthesis of L-tryptophan from indole and L-serine. The protein is Tryptophan synthase beta chain of Sinorhizobium fredii (strain NBRC 101917 / NGR234).